The sequence spans 370 residues: 3-dehydroquinate synthase (370 aa).

Residues 108 to 112 (GVVGD), 132 to 133 (TT), lysine 145, and lysine 154 each bind NAD(+). The Zn(2+) site is built by glutamate 187, histidine 250, and histidine 268.

The protein belongs to the sugar phosphate cyclases superfamily. Dehydroquinate synthase family. Co(2+) is required as a cofactor. Requires Zn(2+) as cofactor. NAD(+) serves as cofactor.

Its subcellular location is the cytoplasm. It carries out the reaction 7-phospho-2-dehydro-3-deoxy-D-arabino-heptonate = 3-dehydroquinate + phosphate. Its pathway is metabolic intermediate biosynthesis; chorismate biosynthesis; chorismate from D-erythrose 4-phosphate and phosphoenolpyruvate: step 2/7. In terms of biological role, catalyzes the conversion of 3-deoxy-D-arabino-heptulosonate 7-phosphate (DAHP) to dehydroquinate (DHQ). This Caulobacter vibrioides (strain NA1000 / CB15N) (Caulobacter crescentus) protein is 3-dehydroquinate synthase.